A 256-amino-acid chain; its full sequence is Nuclear shuttle protein (256 aa).

Residues 1 to 16 are compositionally biased toward polar residues; the sequence is MYSTSNRRGRSQTQRG. A disordered region spans residues 1-46; that stretch reads MYSTSNRRGRSQTQRGSHVRRTGVKRSYGAARGDDRRRPNVVSKTQ. A Bipartite nuclear localization signal motif is present at residues 21-42; it reads RTGVKRSYGAARGDDRRRPNVV. The Nuclear localization signal signature appears at 81 to 96; the sequence is SYVKTVPNRTRTYIKL. The interaction with Arabidopsis thaliana NSI protein stretch occupies residues 150–187; it reads ELFGARIHCHGNLSVVPALKDRYYIRHVTKRVVSLEKD. The Nuclear export signal motif lies at 177–198; it reads VTKRVVSLEKDTLLIDLHGTTQ.

This sequence belongs to the begomovirus nuclear shuttle protein family. In terms of assembly, binds to single-stranded and double-stranded viral DNA. Interacts with the host nuclear shuttle interacting (NSI) protein. This interaction may allow NSP to recruit NSI monomers to the viral genome and thus regulate nuclear export of viral genome by NSP.

The protein localises to the host nucleus. It is found in the host cytoplasm. Its subcellular location is the host cell membrane. Functionally, binds to the genomic viral ssDNA, shuttles it into and out of the cell nucleus. Begomoviruses use 2 proteins to transport their DNA from cell to cell. The nuclear shuttle protein (NSP) shuttles it between nucleus and cytoplasm and the movement protein (MP) probably transports the DNA-NSP complex to the cell periphery and facilitates movement across the cell wall. This chain is Nuclear shuttle protein, found in Squash leaf curl virus (SLCV).